The primary structure comprises 189 residues: Thioredoxin-like protein CITRX, chloroplastic (189 aa).

The N-terminal 36 residues, 1–36 (MAMAAAASLLPACAAPTLPGRAFRPRRNSTPTASLS), are a transit peptide targeting the chloroplast. In terms of domain architecture, Thioredoxin spans 72 to 189 (GSGKYIAPDY…MIRNIIDNEL (118 aa)). Active-site nucleophile residues include C112 and C115. An intrachain disulfide couples C112 to C115.

Belongs to the thioredoxin family. Plant CITRX-type subfamily.

It is found in the plastid. It localises to the chloroplast. Its function is as follows. Probable thiol-disulfide oxidoreductase that may play a role in proper chloroplast development. The protein is Thioredoxin-like protein CITRX, chloroplastic of Oryza sativa subsp. indica (Rice).